A 510-amino-acid polypeptide reads, in one-letter code: 2,3-bisphosphoglycerate-independent phosphoglycerate mutase (510 aa).

Mn(2+)-binding residues include aspartate 12 and serine 62. Serine 62 (phosphoserine intermediate) is an active-site residue. Substrate contacts are provided by residues histidine 123, 153 to 154 (RD), arginine 185, arginine 191, 261 to 264 (RPDR), and lysine 336. 5 residues coordinate Mn(2+): aspartate 403, histidine 407, aspartate 444, histidine 445, and histidine 462.

It belongs to the BPG-independent phosphoglycerate mutase family. In terms of assembly, monomer. It depends on Mn(2+) as a cofactor.

It catalyses the reaction (2R)-2-phosphoglycerate = (2R)-3-phosphoglycerate. It functions in the pathway carbohydrate degradation; glycolysis; pyruvate from D-glyceraldehyde 3-phosphate: step 3/5. In terms of biological role, essential for rapid growth and for sporulation. Catalyzes the interconversion of 2-phosphoglycerate and 3-phosphoglycerate. The chain is 2,3-bisphosphoglycerate-independent phosphoglycerate mutase from Priestia megaterium (strain DSM 319 / IMG 1521) (Bacillus megaterium).